The sequence spans 70 residues: ATP synthase subunit c (70 aa).

2 helical membrane passes run 4 to 24 (IAAA…NGLI) and 47 to 67 (FIGI…SFIV).

Belongs to the ATPase C chain family. As to quaternary structure, F-type ATPases have 2 components, F(1) - the catalytic core - and F(0) - the membrane proton channel. F(1) has five subunits: alpha(3), beta(3), gamma(1), delta(1), epsilon(1). F(0) has three main subunits: a(1), b(2) and c(10-14). The alpha and beta chains form an alternating ring which encloses part of the gamma chain. F(1) is attached to F(0) by a central stalk formed by the gamma and epsilon chains, while a peripheral stalk is formed by the delta and b chains.

The protein resides in the cell membrane. Its function is as follows. F(1)F(0) ATP synthase produces ATP from ADP in the presence of a proton or sodium gradient. F-type ATPases consist of two structural domains, F(1) containing the extramembraneous catalytic core and F(0) containing the membrane proton channel, linked together by a central stalk and a peripheral stalk. During catalysis, ATP synthesis in the catalytic domain of F(1) is coupled via a rotary mechanism of the central stalk subunits to proton translocation. In terms of biological role, key component of the F(0) channel; it plays a direct role in translocation across the membrane. A homomeric c-ring of between 10-14 subunits forms the central stalk rotor element with the F(1) delta and epsilon subunits. In Staphylococcus carnosus (strain TM300), this protein is ATP synthase subunit c.